The chain runs to 643 residues: Phosphomethylpyrimidine synthase (643 aa).

Substrate-binding positions include asparagine 248, methionine 277, tyrosine 306, histidine 342, 362–364 (SRG), 403–406 (DGLR), and glutamate 442. Position 446 (histidine 446) interacts with Zn(2+). Tyrosine 469 serves as a coordination point for substrate. Histidine 510 contacts Zn(2+). 3 residues coordinate [4Fe-4S] cluster: cysteine 590, cysteine 593, and cysteine 598.

The protein belongs to the ThiC family. Homodimer. It depends on [4Fe-4S] cluster as a cofactor.

It carries out the reaction 5-amino-1-(5-phospho-beta-D-ribosyl)imidazole + S-adenosyl-L-methionine = 4-amino-2-methyl-5-(phosphooxymethyl)pyrimidine + CO + 5'-deoxyadenosine + formate + L-methionine + 3 H(+). Its pathway is cofactor biosynthesis; thiamine diphosphate biosynthesis. Functionally, catalyzes the synthesis of the hydroxymethylpyrimidine phosphate (HMP-P) moiety of thiamine from aminoimidazole ribotide (AIR) in a radical S-adenosyl-L-methionine (SAM)-dependent reaction. In Burkholderia multivorans (strain ATCC 17616 / 249), this protein is Phosphomethylpyrimidine synthase.